The primary structure comprises 130 residues: Holo-[acyl-carrier-protein] synthase (130 aa).

Aspartate 9 and glutamate 58 together coordinate Mg(2+).

The protein belongs to the P-Pant transferase superfamily. AcpS family. Requires Mg(2+) as cofactor.

Its subcellular location is the cytoplasm. It catalyses the reaction apo-[ACP] + CoA = holo-[ACP] + adenosine 3',5'-bisphosphate + H(+). In terms of biological role, transfers the 4'-phosphopantetheine moiety from coenzyme A to a Ser of acyl-carrier-protein. This Mycolicibacterium paratuberculosis (strain ATCC BAA-968 / K-10) (Mycobacterium paratuberculosis) protein is Holo-[acyl-carrier-protein] synthase.